The sequence spans 1081 residues: Dyslexia-associated protein KIAA0319 homolog (1081 aa).

A signal peptide spans 1–22; the sequence is MVSPPGVLSSLLLLAAMAGGSS. Positions 23-99 constitute an MANSC domain; sequence QQCSEGRTYS…PRTTGPIRSY (77 aa). The Extracellular segment spans residues 23 to 964; sequence QQCSEGRTYS…WDGESNCEWS (942 aa). Disordered stretches follow at residues 141–160, 168–216, and 228–298; these read LPFLGKDGGPEETAEYSDDY, LQPS…DLTP, and NEST…TTVE. 3 stretches are compositionally biased toward polar residues: residues 197 to 209, 228 to 253, and 283 to 298; these read ASATGDNSAASTE, NESTWSPTPRHSEMSSMWPSSVTASP, and HNPSPASLESSPTTVE. PKD domains lie at 345-436, 444-533, 539-629, 630-723, and 729-820; these read AVSA…VMPA, VAIV…IRGS, VANA…VQAE, NNQA…VKKE, and RAQA…VLPD. Asn-430 and Asn-522 each carry an N-linked (GlcNAc...) asparagine glycan. A helical transmembrane segment spans residues 965–985; it reads VFYVAALALTLTVLTGAVTWV. At 986-1081 the chain is on the cytoplasmic side; that stretch reads CICCCRRRKR…VSFGYYSKDR (96 aa). The Endocytosis signal signature appears at 1004 to 1007; sequence YTIL.

As to quaternary structure, homodimer. Interacts with AP2M1; required for clathrin-mediated endocytosis. In terms of processing, N-glycosylated. O-glycosylated. Post-translationally, shedding of the extracellular domain and intramembrane cleavage produce several proteolytic products. The intramembrane cleavage releases a soluble cytoplasmic polypeptide that translocates to the nucleolus. In terms of tissue distribution, highly expressed during development in ventricular zone, intermediate zone, cortical plate, striatum, hippocampus, and brain stem.

The protein resides in the cell membrane. The protein localises to the early endosome membrane. Functionally, involved in neuronal migration during development of the cerebral neocortex. May function in a cell autonomous and a non-cell autonomous manner and play a role in appropriate adhesion between migrating neurons and radial glial fibers. May also regulate growth and differentiation of dendrites. The protein is Dyslexia-associated protein KIAA0319 homolog of Rattus norvegicus (Rat).